The following is a 736-amino-acid chain: Elongation factor 2 (736 aa).

The 217-residue stretch at 18 to 234 folds into the tr-type G domain; the sequence is TRVRNIGIIA…VIDAYTASDK (217 aa). GTP contacts are provided by residues 27–34, 93–97, and 147–150; these read AHVDHGKT, DTPGH, and NKVD. His603 bears the Diphthamide mark.

The protein belongs to the TRAFAC class translation factor GTPase superfamily. Classic translation factor GTPase family. EF-G/EF-2 subfamily.

It localises to the cytoplasm. Catalyzes the GTP-dependent ribosomal translocation step during translation elongation. During this step, the ribosome changes from the pre-translocational (PRE) to the post-translocational (POST) state as the newly formed A-site-bound peptidyl-tRNA and P-site-bound deacylated tRNA move to the P and E sites, respectively. Catalyzes the coordinated movement of the two tRNA molecules, the mRNA and conformational changes in the ribosome. The protein is Elongation factor 2 (fusA) of Saccharolobus solfataricus (strain ATCC 35092 / DSM 1617 / JCM 11322 / P2) (Sulfolobus solfataricus).